The following is a 370-amino-acid chain: Pulmonary surfactant-associated protein B (370 aa).

A signal peptide spans 1–24; the sequence is MAKSHLPPWLLLLLLPTLCGPGTA. Residues 25–184 constitute a propeptide that is removed on maturation; that stretch reads VWATSPLACA…PHTQDLSAQR (160 aa). Positions 26–66 constitute a Saposin A-type domain; the sequence is WATSPLACAQGPEFWCQSLEQALQCKALGHCLQEVWGHVGA. 3 consecutive Saposin B-type domains span residues 66–148, 188–265, and 284–359; these read ADDL…QPGS, PLPL…SSVD, and QDPE…VATL. Cystine bridges form between Cys70-Cys144, Cys73-Cys138, Cys101-Cys113, Cys192-Cys261, Cys195-Cys255, Cys219-Cys230, Cys288-Cys355, Cys291-Cys349, and Cys314-Cys324. The propeptide occupies 264–370; that stretch reads VDSIGQVPPT…PLQCIQSPHF (107 aa). N-linked (GlcNAc...) asparagine glycosylation is present at Asn300.

In terms of assembly, homodimer; disulfide-linked.

It localises to the secreted. The protein resides in the extracellular space. Its subcellular location is the surface film. Pulmonary surfactant-associated proteins promote alveolar stability by lowering the surface tension at the air-liquid interface in the peripheral air spaces. SP-B increases the collapse pressure of palmitic acid to nearly 70 millinewtons per meter. This Oryctolagus cuniculus (Rabbit) protein is Pulmonary surfactant-associated protein B (SFTPB).